The sequence spans 429 residues: Adenylosuccinate synthetase (429 aa).

GTP-binding positions include 12 to 18 (GDEGKGK) and 40 to 42 (GHT). Residue Asp13 is the Proton acceptor of the active site. Mg(2+) is bound by residues Asp13 and Gly40. IMP-binding positions include 13–16 (DEGK), 38–41 (NAGH), Thr128, Arg142, Gln224, Thr239, and Arg303. Residue His41 is the Proton donor of the active site. 299–305 (VTTGRPR) is a substrate binding site. Residues Arg305, 331–333 (LLD), and 413–415 (SVG) each bind GTP.

This sequence belongs to the adenylosuccinate synthetase family. As to quaternary structure, homodimer. Requires Mg(2+) as cofactor.

The protein resides in the cytoplasm. The enzyme catalyses IMP + L-aspartate + GTP = N(6)-(1,2-dicarboxyethyl)-AMP + GDP + phosphate + 2 H(+). It participates in purine metabolism; AMP biosynthesis via de novo pathway; AMP from IMP: step 1/2. Its function is as follows. Plays an important role in the de novo pathway of purine nucleotide biosynthesis. Catalyzes the first committed step in the biosynthesis of AMP from IMP. The sequence is that of Adenylosuccinate synthetase from Clostridioides difficile (strain 630) (Peptoclostridium difficile).